The primary structure comprises 317 residues: tRNA pseudouridine synthase B (317 aa).

Residue D47 is the Nucleophile of the active site.

The protein belongs to the pseudouridine synthase TruB family. Type 1 subfamily.

The catalysed reaction is uridine(55) in tRNA = pseudouridine(55) in tRNA. Functionally, responsible for synthesis of pseudouridine from uracil-55 in the psi GC loop of transfer RNAs. The chain is tRNA pseudouridine synthase B from Vibrio atlanticus (strain LGP32) (Vibrio splendidus (strain Mel32)).